Reading from the N-terminus, the 289-residue chain is MASLKDVKIKIAGVRKTKQITKAMNMVASAKLRGAQIKIEHFRPYAEKFQDVISNLATRSDETVHKLLEKRTNGTSCIFILITSDRGLCGIFNTMLIIKALELAKQKTTKGKKVSFICIGRKGRDAIKKTHYPILSDYSDKFTRDYQLASHISEKVIDGYLTVNMDEVVLIYGQFINAMRQIVGFSTLLPIHPKPLDKEQLEKYSEYIYEPGVAILLSELLPKFVTTQIYRGFLDTDASENAARMTAMDNATRNCDELIGNLTRLYNKTRQASITSELIDIVSGAEALK.

This sequence belongs to the ATPase gamma chain family. F-type ATPases have 2 components, CF(1) - the catalytic core - and CF(0) - the membrane proton channel. CF(1) has five subunits: alpha(3), beta(3), gamma(1), delta(1), epsilon(1). CF(0) has three main subunits: a, b and c.

The protein localises to the cell membrane. In terms of biological role, produces ATP from ADP in the presence of a proton gradient across the membrane. The gamma chain is believed to be important in regulating ATPase activity and the flow of protons through the CF(0) complex. This is ATP synthase gamma chain from Lawsonia intracellularis (strain PHE/MN1-00).